A 232-amino-acid polypeptide reads, in one-letter code: Flagellar L-ring protein (232 aa).

An N-terminal signal peptide occupies residues 1 to 21 (MQKYALHAYPVMALMVATLTG). Residue cysteine 22 is the site of N-palmitoyl cysteine attachment. Residue cysteine 22 is the site of S-diacylglycerol cysteine attachment.

It belongs to the FlgH family. As to quaternary structure, the basal body constitutes a major portion of the flagellar organelle and consists of four rings (L,P,S, and M) mounted on a central rod.

Its subcellular location is the cell outer membrane. The protein localises to the bacterial flagellum basal body. In terms of biological role, assembles around the rod to form the L-ring and probably protects the motor/basal body from shearing forces during rotation. This is Flagellar L-ring protein from Salmonella gallinarum (strain 287/91 / NCTC 13346).